The following is a 2104-amino-acid chain: Protein Ycf2 (2104 aa).

An ATP-binding site is contributed by 1396–1403 (GPVETGRS).

It belongs to the Ycf2 family.

It localises to the plastid. The protein resides in the chloroplast stroma. Functionally, probable ATPase of unknown function. Its presence in a non-photosynthetic plant (Epifagus virginiana) and experiments in tobacco indicate that it has an essential function which is probably not related to photosynthesis. The sequence is that of Protein Ycf2 (ycf2-A) from Adiantum capillus-veneris (Maidenhair fern).